Here is a 248-residue protein sequence, read N- to C-terminus: Triosephosphate isomerase (248 aa).

Asparagine 10 and lysine 12 together coordinate substrate. Histidine 95 acts as the Electrophile in catalysis. Glutamate 165 functions as the Proton acceptor in the catalytic mechanism.

This sequence belongs to the triosephosphate isomerase family. Homodimer.

It carries out the reaction D-glyceraldehyde 3-phosphate = dihydroxyacetone phosphate. The protein operates within carbohydrate biosynthesis; gluconeogenesis. It participates in carbohydrate degradation; glycolysis; D-glyceraldehyde 3-phosphate from glycerone phosphate: step 1/1. The sequence is that of Triosephosphate isomerase (TPI1) from Zygosaccharomyces bailii.